The sequence spans 287 residues: CTD small phosphatase-like protein 3 (287 aa).

The region spanning 60–219 (RSTPEYTLVL…LKLCSFLEAI (160 aa)) is the FCP1 homology domain.

The protein belongs to the CTDSPL2 family.

In terms of biological role, probable phosphatase. In Caenorhabditis elegans, this protein is CTD small phosphatase-like protein 3 (scpl-3).